The primary structure comprises 74 residues: Protein krueppel (74 aa).

C2H2-type zinc fingers lie at residues 1–4, 10–32, 38–60, and 66–74; these read ERTH, FKCP…MRLH, YHCS…LRVH, and YTCEICKAK.

It belongs to the krueppel C2H2-type zinc-finger protein family.

The protein localises to the nucleus. Krueppel is a gap class segmentation protein. In Bradysia coprophila (Dark-winged fungus gnat), this protein is Protein krueppel (Kr).